A 478-amino-acid chain; its full sequence is Methionine aminopeptidase 2 (478 aa).

The disordered stretch occupies residues 1 to 123; sequence MAGVEEASSF…DPPSVPICDL (123 aa). Alanine 2 is subject to N-acetylalanine. A compositionally biased stretch (basic residues) spans 36 to 46; sequence KKKRRKKKKGK. Positions 55–79 are enriched in basic and acidic residues; the sequence is ELDKESGTSVDEVAKQLERQALEEK. A phosphoserine; alternate mark is found at serine 60 and serine 63. O-linked (GlcNAc) serine; alternate glycosylation is found at serine 60 and serine 63. A compositionally biased stretch (acidic residues) spans 80–92; it reads EKDDDDEDGDGDG. Basic residues predominate over residues 97–109; sequence GKKKKKKKKKRGP. Histidine 231 lines the substrate pocket. 3 residues coordinate a divalent metal cation: aspartate 251, aspartate 262, and histidine 331. Histidine 339 provides a ligand contact to substrate. Glutamate 364 and glutamate 459 together coordinate a divalent metal cation.

This sequence belongs to the peptidase M24A family. Methionine aminopeptidase eukaryotic type 2 subfamily. In terms of assembly, binds EIF2S1 at low magnesium concentrations. Interacts strongly with the eIF-2 gamma-subunit EIF2S3. It depends on Co(2+) as a cofactor. The cofactor is Zn(2+). Mn(2+) serves as cofactor. Requires Fe(2+) as cofactor. Post-translationally, O-glycosylated; contains 12 O-linked GlcNAc. In terms of processing, contains approximately 12 O-linked N-acetylglucosamine (GlcNAc) residues. O-glycosylation is required for EIF2S1 binding.

The protein localises to the cytoplasm. It carries out the reaction Release of N-terminal amino acids, preferentially methionine, from peptides and arylamides.. In terms of biological role, cotranslationally removes the N-terminal methionine from nascent proteins. The N-terminal methionine is often cleaved when the second residue in the primary sequence is small and uncharged (Met-Ala-, Cys, Gly, Pro, Ser, Thr, or Val). Its function is as follows. Protects eukaryotic initiation factor EIF2S1 from translation-inhibiting phosphorylation by inhibitory kinases such as EIF2AK2/PKR and EIF2AK1/HCR. Plays a critical role in the regulation of protein synthesis. This is Methionine aminopeptidase 2 (Metap2) from Rattus norvegicus (Rat).